We begin with the raw amino-acid sequence, 112 residues long: Divalent-cation tolerance protein CutA (112 aa).

Cu cation is bound by residues Cys16, His83, and His84.

It belongs to the CutA family. In terms of assembly, homotrimer. The cofactor is Cu cation.

The protein resides in the cytoplasm. Functionally, involved in resistance toward heavy metals. The chain is Divalent-cation tolerance protein CutA from Shigella flexneri.